A 243-amino-acid polypeptide reads, in one-letter code: Hydroxyacylglutathione hydrolase (243 aa).

The Zn(2+) site is built by H59, H61, D63, H64, H117, D135, and H173.

The protein belongs to the metallo-beta-lactamase superfamily. Glyoxalase II family. In terms of assembly, monomer. Requires Zn(2+) as cofactor.

The catalysed reaction is an S-(2-hydroxyacyl)glutathione + H2O = a 2-hydroxy carboxylate + glutathione + H(+). The protein operates within secondary metabolite metabolism; methylglyoxal degradation; (R)-lactate from methylglyoxal: step 2/2. In terms of biological role, thiolesterase that catalyzes the hydrolysis of S-D-lactoyl-glutathione to form glutathione and D-lactic acid. In Acidiphilium cryptum (strain JF-5), this protein is Hydroxyacylglutathione hydrolase.